The following is a 268-amino-acid chain: Sterol uptake protein 2 (268 aa).

It belongs to the SUT1 family.

The protein resides in the nucleus. Its function is as follows. Putative transcription factor involved in the regulation of the activity of the cAMP/protein kinase A pathway. Involved in sterol uptake. With SUT1, positively regulates mating by repressing the expression of the mating inhibitors NCE102, PRR2 and RHO5 in response to pheromone. The protein is Sterol uptake protein 2 of Saccharomyces cerevisiae (strain ATCC 204508 / S288c) (Baker's yeast).